Consider the following 434-residue polypeptide: Gamma-glutamyl phosphate reductase (434 aa).

Belongs to the gamma-glutamyl phosphate reductase family.

It is found in the cytoplasm. It carries out the reaction L-glutamate 5-semialdehyde + phosphate + NADP(+) = L-glutamyl 5-phosphate + NADPH + H(+). It participates in amino-acid biosynthesis; L-proline biosynthesis; L-glutamate 5-semialdehyde from L-glutamate: step 2/2. Functionally, catalyzes the NADPH-dependent reduction of L-glutamate 5-phosphate into L-glutamate 5-semialdehyde and phosphate. The product spontaneously undergoes cyclization to form 1-pyrroline-5-carboxylate. The polypeptide is Gamma-glutamyl phosphate reductase (Trichormus variabilis (strain ATCC 29413 / PCC 7937) (Anabaena variabilis)).